Consider the following 130-residue polypeptide: General stress protein 13 (130 aa).

Positions 8–77 constitute an S1 motif domain; the sequence is GSVYTGKVTG…EKGKISLSIR (70 aa). The segment at 76–109 is disordered; sequence IRATQAAPEKKESKPRKPKAAQVSEEASTPQGFN. The segment covering 100 to 109 has biased composition (polar residues); it reads EEASTPQGFN.

As to quaternary structure, found in association with the 30S subunit of the ribosome.

The protein localises to the cytoplasm. This is General stress protein 13 (yugI) from Bacillus subtilis (strain 168).